The primary structure comprises 84 residues: Cell division topological specificity factor (84 aa).

The protein belongs to the MinE family.

Its function is as follows. Prevents the cell division inhibition by proteins MinC and MinD at internal division sites while permitting inhibition at polar sites. This ensures cell division at the proper site by restricting the formation of a division septum at the midpoint of the long axis of the cell. The chain is Cell division topological specificity factor from Azotobacter vinelandii (strain DJ / ATCC BAA-1303).